Consider the following 408-residue polypeptide: Peptidase T (408 aa).

His-78 lines the Zn(2+) pocket. Asp-80 is an active-site residue. Zn(2+) is bound at residue Asp-141. The active-site Proton acceptor is Glu-175. Zn(2+) contacts are provided by Glu-176, Asp-198, and His-380.

It belongs to the peptidase M20B family. It depends on Zn(2+) as a cofactor.

The protein localises to the cytoplasm. The catalysed reaction is Release of the N-terminal residue from a tripeptide.. Its function is as follows. Cleaves the N-terminal amino acid of tripeptides. The chain is Peptidase T from Clostridium botulinum (strain Loch Maree / Type A3).